The sequence spans 218 residues: Hypoxanthine-guanine phosphoribosyltransferase (218 aa).

Ala-2 bears the N-acetylalanine mark. Lys-69 serves as a coordination point for GMP. Lys-103 carries the N6-acetyllysine modification. A Glycyl lysine isopeptide (Lys-Gly) (interchain with G-Cter in SUMO1); alternate cross-link involves residue Lys-115. Lys-115 is covalently cross-linked (Glycyl lysine isopeptide (Lys-Gly) (interchain with G-Cter in SUMO2); alternate). GMP contacts are provided by residues 134-142 (EDIIDTGKT), Lys-166, 186-188 (KFV), and Asp-194. Asp-138 serves as the catalytic Proton acceptor. Phosphothreonine is present on Thr-142. Residue Asp-194 participates in Mg(2+) binding.

Belongs to the purine/pyrimidine phosphoribosyltransferase family. Homotetramer. Requires Mg(2+) as cofactor.

The protein resides in the cytoplasm. It catalyses the reaction IMP + diphosphate = hypoxanthine + 5-phospho-alpha-D-ribose 1-diphosphate. It carries out the reaction GMP + diphosphate = guanine + 5-phospho-alpha-D-ribose 1-diphosphate. It participates in purine metabolism; IMP biosynthesis via salvage pathway; IMP from hypoxanthine: step 1/1. Functionally, converts guanine to guanosine monophosphate, and hypoxanthine to inosine monophosphate. Transfers the 5-phosphoribosyl group from 5-phosphoribosylpyrophosphate onto the purine. Plays a central role in the generation of purine nucleotides through the purine salvage pathway. The protein is Hypoxanthine-guanine phosphoribosyltransferase (HPRT1) of Homo sapiens (Human).